Here is a 483-residue protein sequence, read N- to C-terminus: Betaine aldehyde dehydrogenase (483 aa).

K(+) contacts are provided by Ile-27 and Asp-93. 149–151 (GAW) contributes to the NAD(+) binding site. Lys-161 functions as the Charge relay system in the catalytic mechanism. Position 175 to 178 (175 to 178 (KPSE)) interacts with NAD(+). Val-179 contacts K(+). 228-231 (SVPT) contacts NAD(+). Position 243 (Val-243) interacts with K(+). The Proton acceptor role is filled by Glu-249. The NAD(+) site is built by Gly-251, Cys-283, and Glu-380. Cys-283 serves as the catalytic Nucleophile. Cys-283 bears the Cysteine sulfenic acid (-SOH) mark. Residues Lys-450 and Gly-453 each contribute to the K(+) site. The active-site Charge relay system is the Glu-457.

This sequence belongs to the aldehyde dehydrogenase family. In terms of assembly, dimer of dimers. K(+) is required as a cofactor.

It catalyses the reaction betaine aldehyde + NAD(+) + H2O = glycine betaine + NADH + 2 H(+). Its pathway is amine and polyamine biosynthesis; betaine biosynthesis via choline pathway; betaine from betaine aldehyde: step 1/1. Functionally, involved in the biosynthesis of the osmoprotectant glycine betaine. Catalyzes the irreversible oxidation of betaine aldehyde to the corresponding acid. The chain is Betaine aldehyde dehydrogenase from Cereibacter sphaeroides (strain ATCC 17023 / DSM 158 / JCM 6121 / CCUG 31486 / LMG 2827 / NBRC 12203 / NCIMB 8253 / ATH 2.4.1.) (Rhodobacter sphaeroides).